Here is a 275-residue protein sequence, read N- to C-terminus: MALVKVKPTSAGRRAVVKVVNKDLHKGAPYAPLLEKQIQNAGRNNNGHITTRHKGGGHKHHYRVVDFRRNKDGIVAKVERIEYDPNRTAHIALLCYADGERRYIIAPRGLKAGAEVVNGAEAPIKAGNCLPIRNIPVGTTIHCIEMQPGKGAQLARSAGASVMLLAREGSYAQLRLRSGEIRKVHIDCRATVGEVGNEEHSLRKLGKAGATRWRGIRPTVRGVAMNPVDHPHGGGEGRTGEGRVPVSPWGTPAKGYRTRNNKRTDNMIVRRRHSK.

The disordered stretch occupies residues 223 to 275 (VAMNPVDHPHGGGEGRTGEGRVPVSPWGTPAKGYRTRNNKRTDNMIVRRRHSK). Over residues 229–241 (DHPHGGGEGRTGE) the composition is skewed to basic and acidic residues.

The protein belongs to the universal ribosomal protein uL2 family. As to quaternary structure, part of the 50S ribosomal subunit. Forms a bridge to the 30S subunit in the 70S ribosome.

One of the primary rRNA binding proteins. Required for association of the 30S and 50S subunits to form the 70S ribosome, for tRNA binding and peptide bond formation. It has been suggested to have peptidyltransferase activity; this is somewhat controversial. Makes several contacts with the 16S rRNA in the 70S ribosome. This chain is Large ribosomal subunit protein uL2, found in Laribacter hongkongensis (strain HLHK9).